The sequence spans 341 residues: Flap endonuclease 1 (341 aa).

The interval 1–98 (MGVQIGELIP…RELEKRREAR (98 aa)) is N-domain. Mg(2+) is bound by residues Asp-27, Asp-80, Glu-152, Glu-154, Asp-173, Asp-175, and Asp-236. Residues 116 to 258 (EAKKYAMRAT…KALTIVKRTK (143 aa)) are I-domain. Residues 330-338 (KQSTLESWF) form an interaction with PCNA region.

The protein belongs to the XPG/RAD2 endonuclease family. FEN1 subfamily. As to quaternary structure, interacts with PCNA. PCNA stimulates the nuclease activity without altering cleavage specificity. Requires Mg(2+) as cofactor.

In terms of biological role, structure-specific nuclease with 5'-flap endonuclease and 5'-3' exonuclease activities involved in DNA replication and repair. During DNA replication, cleaves the 5'-overhanging flap structure that is generated by displacement synthesis when DNA polymerase encounters the 5'-end of a downstream Okazaki fragment. Binds the unpaired 3'-DNA end and kinks the DNA to facilitate 5' cleavage specificity. Cleaves one nucleotide into the double-stranded DNA from the junction in flap DNA, leaving a nick for ligation. Also involved in the base excision repair (BER) pathway. Acts as a genome stabilization factor that prevents flaps from equilibrating into structures that lead to duplications and deletions. Also possesses 5'-3' exonuclease activity on nicked or gapped double-stranded DNA. This is Flap endonuclease 1 from Thermococcus onnurineus (strain NA1).